The chain runs to 579 residues: ATP-dependent lipid A-core flippase (579 aa).

The next 5 helical transmembrane spans lie at 24 to 44, 63 to 83, 150 to 170, 251 to 271, and 275 to 295; these read FALS…LPAL, WVPL…FIST, VLGL…IVFA, VIQF…AGQA, and TTTV…FAPL. In terms of domain architecture, ABC transmembrane type-1 spans 25-307; that stretch reads ALSIVGLILT…LTAVNDQLQR (283 aa). The ABC transporter domain maps to 339–575; the sequence is LAFRDVGLTY…QGRYAQLHAL (237 aa). An ATP-binding site is contributed by 373 to 380; the sequence is GASGSGKT.

It belongs to the ABC transporter superfamily. Lipid exporter (TC 3.A.1.106) family. In terms of assembly, homodimer.

It is found in the cell inner membrane. It carries out the reaction ATP + H2O + lipid A-core oligosaccharideSide 1 = ADP + phosphate + lipid A-core oligosaccharideSide 2.. Functionally, involved in lipopolysaccharide (LPS) biosynthesis. Translocates lipid A-core from the inner to the outer leaflet of the inner membrane. Transmembrane domains (TMD) form a pore in the inner membrane and the ATP-binding domain (NBD) is responsible for energy generation. The polypeptide is ATP-dependent lipid A-core flippase (Thiobacillus denitrificans (strain ATCC 25259 / T1)).